We begin with the raw amino-acid sequence, 180 residues long: Transcriptional repressor NrdR (180 aa).

A zinc finger spans residues 3–34 (CPRCSKQEIRVLESRSAEGGQSVRRRRECMSC). Residues 49–139 (IMVIKRDGSR…VYRQFQGIKD (91 aa)) enclose the ATP-cone domain. The tract at residues 155 to 180 (LERLLQDSSASDSESSGSPDLVGEYS) is disordered. A compositionally biased stretch (low complexity) spans 160–174 (QDSSASDSESSGSPD).

This sequence belongs to the NrdR family. The cofactor is Zn(2+).

Functionally, negatively regulates transcription of bacterial ribonucleotide reductase nrd genes and operons by binding to NrdR-boxes. In Synechococcus sp. (strain JA-2-3B'a(2-13)) (Cyanobacteria bacterium Yellowstone B-Prime), this protein is Transcriptional repressor NrdR.